A 219-amino-acid polypeptide reads, in one-letter code: Membrin-12 (219 aa).

Ala2 carries the post-translational modification N-acetylalanine. The Cytoplasmic segment spans residues 2–197 (ASGTVGGLSE…LIERRNRVDT (196 aa)). A helical; Anchor for type IV membrane protein transmembrane segment spans residues 198 to 215 (WIKYAGMIATLVILYLFI). Residues 216–219 (RWTR) are Vesicular-facing.

Belongs to the GOSR2 family.

It is found in the golgi apparatus membrane. Functionally, involved in transport of proteins from the cis/medial-Golgi to the trans-Golgi network. The polypeptide is Membrin-12 (MEMB12) (Arabidopsis thaliana (Mouse-ear cress)).